Reading from the N-terminus, the 303-residue chain is Phytochrome-associated serine/threonine-protein phosphatase 1 (303 aa).

Residues Asp-50, His-52, Asp-78, and Asn-110 each coordinate Zn(2+). His-111 acts as the Proton donor in catalysis. Zn(2+)-binding residues include His-160 and His-234.

This sequence belongs to the PPP phosphatase family. PP-6 (PP-V) subfamily. As to quaternary structure, interacts with PHYA and PHYB, mostly when they are phosphorylated and in Pfr forms. Interacts with TAP46. Interacts with PIN1 and PIN2. Interacts with ABI5. Interacts with PIF3 and PIF4. Protein phosphatase 6 (PP6) holoenzyme is a heterotrimeric complex formed by the catalytic subunit FYPP, a SAPS domain-containing subunit (SAL) and a protein phosphatase 2A regulatory subunit A (PP2AA). Zn(2+) serves as cofactor. Mostly expressed in flowers. Also detected to a lower extent in stems and leaves. Expressed in roots.

The protein resides in the cytoplasm. The enzyme catalyses O-phospho-L-seryl-[protein] + H2O = L-seryl-[protein] + phosphate. It carries out the reaction O-phospho-L-threonyl-[protein] + H2O = L-threonyl-[protein] + phosphate. Catalytic subunit of protein phosphatase 6 (PP6). Dephosphorylates phosphorylated phytochromes, with a preference toward Pfr forms. Plays a major role in the photoperiodic control of flowering time in long days by modulating phytochrome signals in flowering time control. Involved in the regulation of polar auxin transport in roots. Dephosphorylates directly the auxin efflux carriers PIN1 and PIN2, thus promoting their proper polar localization in root cell plasma membrane. Acts antagonistically with the protein kinase PID to regulate the reversible phosphorylation of PIN and polar targeting, subsequently impacting polar auxin transport and plant development. Involved in the regulation of abscisic acid (ABA) signaling during seed germination and postgermination seedling growth. Functions as a negative regulator of ABA signaling through direct dephosphorylation and destabilization of ABI5. Acts antagonistically with the protein kinase SRK2E/SNRK2.6 to regulate ABI5 phosphorylation and ABA responses. Involved in the regulation of phosphorylation status in hypocotyl phototropism. Involved in the negative regulation of photomorphogenesis by controlling the stability and transcriptional activity of PIF3 and PIF4 proteins in the dark, via the regulation of their phosphorylation status. The protein is Phytochrome-associated serine/threonine-protein phosphatase 1 of Arabidopsis thaliana (Mouse-ear cress).